The sequence spans 370 residues: Flagellar P-ring protein 1 (370 aa).

Positions 1–25 (MSVLIKTRHCFVLLGLWLVLPTASA) are cleaved as a signal peptide.

This sequence belongs to the FlgI family. In terms of assembly, the basal body constitutes a major portion of the flagellar organelle and consists of four rings (L,P,S, and M) mounted on a central rod.

It localises to the periplasm. Its subcellular location is the bacterial flagellum basal body. Its function is as follows. Assembles around the rod to form the L-ring and probably protects the motor/basal body from shearing forces during rotation. This chain is Flagellar P-ring protein 1, found in Yersinia pestis.